The chain runs to 132 residues: MKDPRWIMEGEAMAGLVKLRRLSDKSYLGLSGYRYKTHIQVYVLTKIFEITQYPSHDTRQNLAILLNMSPRTIQIWFQNSRSVSRGAAKKKVSKDNGPQEAPKAKIVSNLTVPVKYITWLILSYPSYSQIGN.

The homeobox DNA-binding region spans 29-88 (GLSGYRYKTHIQVYVLTKIFEITQYPSHDTRQNLAILLNMSPRTIQIWFQNSRSVSRGAA). The tract at residues 82-101 (SVSRGAAKKKVSKDNGPQEA) is disordered.

The protein localises to the nucleus. The polypeptide is Homeobox protein HD-4 (HD-4) (Encephalitozoon cuniculi (strain GB-M1) (Microsporidian parasite)).